The following is a 516-amino-acid chain: Chromosomal replication initiator protein DnaA (516 aa).

The segment at 1-72 (MSLEHWNLCL…LLSEFAGDDL (72 aa)) is domain I, interacts with DnaA modulators. The interval 72–179 (LAPALKLAVK…QVEGGINHGA (108 aa)) is domain II. A domain III, AAA+ region region spans residues 180–396 (NLNNSFTFDN…GALKRVIANS (217 aa)). Residues G224, G226, K227, and T228 each contribute to the ATP site. The segment at 397-516 (HFTGRAITPD…YKQLMRILTT (120 aa)) is domain IV, binds dsDNA.

It belongs to the DnaA family. Oligomerizes as a right-handed, spiral filament on DNA at oriC.

It localises to the cytoplasm. Its function is as follows. Plays an essential role in the initiation and regulation of chromosomal replication. ATP-DnaA binds to the origin of replication (oriC) to initiate formation of the DNA replication initiation complex once per cell cycle. Binds the DnaA box (a 9 base pair repeat at the origin) and separates the double-stranded (ds)DNA. Forms a right-handed helical filament on oriC DNA; dsDNA binds to the exterior of the filament while single-stranded (ss)DNA is stabiized in the filament's interior. The ATP-DnaA-oriC complex binds and stabilizes one strand of the AT-rich DNA unwinding element (DUE), permitting loading of DNA polymerase. After initiation quickly degrades to an ADP-DnaA complex that is not apt for DNA replication. Binds acidic phospholipids. This chain is Chromosomal replication initiator protein DnaA, found in Marinomonas sp. (strain MWYL1).